We begin with the raw amino-acid sequence, 341 residues long: Retinol dehydrogenase 10 (341 aa).

The helical; Signal-anchor transmembrane segment at 3–23 threads the bilayer; sequence IVVEFFLVTFKVLWAFVLAAA. 40-64 contacts NADP(+); the sequence is LITGAGSGLGRLFALEFARRRALLV. S197 serves as a coordination point for substrate. The active-site Proton acceptor is Y210.

This sequence belongs to the short-chain dehydrogenases/reductases (SDR) family. As to expression, detected in retina, entire eyecups and in liver (at protein level).

The protein localises to the microsome membrane. The protein resides in the endoplasmic reticulum membrane. It catalyses the reaction all-trans-retinol + NADP(+) = all-trans-retinal + NADPH + H(+). The protein operates within cofactor metabolism; retinol metabolism. Its function is as follows. Retinol dehydrogenase with a clear preference for NADP. Converts all-trans-retinol to all-trans-retinal. The sequence is that of Retinol dehydrogenase 10 (Rdh10) from Rattus norvegicus (Rat).